The sequence spans 320 residues: Malate dehydrogenase (320 aa).

NAD(+) contacts are provided by residues 10–15 (GAGQIG) and Asp-34. Positions 83 and 89 each coordinate substrate. Residues Asn-96 and 119 to 121 (ITN) each bind NAD(+). 2 residues coordinate substrate: Asn-121 and Arg-152. The active-site Proton acceptor is His-176.

The protein belongs to the LDH/MDH superfamily. MDH type 3 family.

It catalyses the reaction (S)-malate + NAD(+) = oxaloacetate + NADH + H(+). In terms of biological role, catalyzes the reversible oxidation of malate to oxaloacetate. The sequence is that of Malate dehydrogenase from Cereibacter sphaeroides (strain ATCC 17025 / ATH 2.4.3) (Rhodobacter sphaeroides).